The primary structure comprises 344 residues: tRNA N6-adenosine threonylcarbamoyltransferase (344 aa).

The Fe cation site is built by H110 and H114. Substrate contacts are provided by residues 133 to 137 (VVSGA), D166, G179, and N278. D303 is a Fe cation binding site.

This sequence belongs to the KAE1 / TsaD family. It depends on Fe(2+) as a cofactor.

It localises to the cytoplasm. The enzyme catalyses L-threonylcarbamoyladenylate + adenosine(37) in tRNA = N(6)-L-threonylcarbamoyladenosine(37) in tRNA + AMP + H(+). In terms of biological role, required for the formation of a threonylcarbamoyl group on adenosine at position 37 (t(6)A37) in tRNAs that read codons beginning with adenine. Is involved in the transfer of the threonylcarbamoyl moiety of threonylcarbamoyl-AMP (TC-AMP) to the N6 group of A37, together with TsaE and TsaB. TsaD likely plays a direct catalytic role in this reaction. This is tRNA N6-adenosine threonylcarbamoyltransferase from Chlamydia pneumoniae (Chlamydophila pneumoniae).